The following is a 355-amino-acid chain: Uroporphyrinogen decarboxylase (355 aa).

Substrate contacts are provided by residues 27 to 31, Asp78, Tyr155, Ser210, and His328; that span reads RQAGR.

It belongs to the uroporphyrinogen decarboxylase family. Homodimer.

The protein localises to the cytoplasm. The catalysed reaction is uroporphyrinogen III + 4 H(+) = coproporphyrinogen III + 4 CO2. It functions in the pathway porphyrin-containing compound metabolism; protoporphyrin-IX biosynthesis; coproporphyrinogen-III from 5-aminolevulinate: step 4/4. In terms of biological role, catalyzes the decarboxylation of four acetate groups of uroporphyrinogen-III to yield coproporphyrinogen-III. This chain is Uroporphyrinogen decarboxylase, found in Pseudomonas aeruginosa (strain LESB58).